An 884-amino-acid polypeptide reads, in one-letter code: Chondroitin sulfate synthase 3 (884 aa).

Residues 1-7 are Cytoplasmic-facing; sequence MAVRSRR. Residues 8–28 form a helical; Signal-anchor for type II membrane protein membrane-spanning segment; it reads PWVSVALGLVLGFTAASWLIA. Residues 29 to 884 are Lumenal-facing; that stretch reads PRVAELSEKR…LGVRDNRTLS (856 aa). Residues 47–164 form a disordered region; the sequence is YYGRSATGPR…NGSGDGGAAV (118 aa). Composition is skewed to low complexity over residues 60-69 and 84-96; these read QQLLPQPQSR and PGPQ…PGGP. Residues Asn-155 and Asn-281 are each glycosylated (N-linked (GlcNAc...) asparagine). Positions 437–456 are disordered; sequence SNSEVSKEDQQLGRTPSFNH. A glycan (N-linked (GlcNAc...) asparagine) is linked at Asn-712. Asp-722 and His-836 together coordinate a divalent metal cation. The N-linked (GlcNAc...) asparagine glycan is linked to Asn-880.

It belongs to the chondroitin N-acetylgalactosaminyltransferase family. It depends on Co(2+) as a cofactor. Mn(2+) serves as cofactor. The cofactor is Cd(2+).

Its subcellular location is the golgi apparatus. It is found in the golgi stack membrane. The enzyme catalyses 3-O-(beta-D-GlcA-(1-&gt;3)-beta-D-GalNAc-(1-&gt;4)-beta-D-GlcA-(1-&gt;3)-beta-D-Gal-(1-&gt;3)-beta-D-Gal-(1-&gt;4)-beta-D-Xyl)-L-seryl-[protein] + UDP-N-acetyl-alpha-D-galactosamine = 3-O-(beta-D-GalNAc-(1-&gt;4)-beta-D-GlcA-(1-&gt;3)-beta-D-GalNAc-(1-&gt;4)-beta-D-GlcA-(1-&gt;3)-beta-D-Gal-(1-&gt;3)-beta-D-Gal-(1-&gt;4)-beta-D-Xyl)-L-seryl-[protein] + UDP + H(+). It carries out the reaction 3-O-{beta-D-GlcA-(1-&gt;3)-[beta-D-GalNAc-(1-&gt;4)-beta-D-GlcA-(1-&gt;3)](n)-beta-D-GalNAc-(1-&gt;4)-beta-D-GlcA-(1-&gt;3)-beta-D-Gal-(1-&gt;3)-beta-D-Gal-(1-&gt;4)-beta-D-Xyl}-L-seryl-[protein] + UDP-N-acetyl-alpha-D-galactosamine = 3-O-{[beta-D-GalNAc-(1-&gt;4)-beta-D-GlcA-(1-&gt;3)](n+1)-beta-D-GalNAc-(1-&gt;4)-beta-D-GlcA-(1-&gt;3)-beta-D-Gal-(1-&gt;3)-beta-D-Gal-(1-&gt;4)-beta-D-Xyl}-L-seryl-[protein] + UDP + H(+). The catalysed reaction is 3-O-(beta-D-GalNAc-(1-&gt;4)-beta-D-GlcA-(1-&gt;3)-beta-D-Gal-(1-&gt;3)-beta-D-Gal-(1-&gt;4)-beta-D-Xyl)-L-seryl-[protein] + UDP-alpha-D-glucuronate = 3-O-(beta-D-GlcA-(1-&gt;3)-beta-D-GalNAc-(1-&gt;4)-beta-D-GlcA-(1-&gt;3)-beta-D-Gal-(1-&gt;3)-beta-D-Gal-(1-&gt;4)-beta-D-Xyl)-L-seryl-[protein] + UDP + H(+). It catalyses the reaction 3-O-{[beta-D-GalNAc-(1-&gt;4)-beta-D-GlcA-(1-&gt;3)](n)-beta-D-GalNAc-(1-&gt;4)-beta-D-GlcA-(1-&gt;3)-beta-D-Gal-(1-&gt;3)-beta-D-Gal-(1-&gt;4)-beta-D-Xyl}-L-seryl-[protein] + UDP-alpha-D-glucuronate = 3-O-{beta-D-GlcA-(1-&gt;3)-[beta-D-GalNAc-(1-&gt;4)-beta-D-GlcA-(1-&gt;3)](n)-beta-D-GalNAc-(1-&gt;4)-beta-D-GlcA-(1-&gt;3)-beta-D-Gal-(1-&gt;3)-beta-D-Gal-(1-&gt;4)-beta-D-Xyl}-L-seryl-[protein] + UDP + H(+). Functionally, has both beta-1,3-glucuronic acid and beta-1,4-N-acetylgalactosamine transferase activity. Transfers glucuronic acid (GlcUA) from UDP-GlcUA and N-acetylgalactosamine (GalNAc) from UDP-GalNAc to the non-reducing end of the elongating chondroitin polymer. Specific activity is much reduced compared to CHSY1. This is Chondroitin sulfate synthase 3 (Chsy3) from Mus musculus (Mouse).